The primary structure comprises 698 residues: Long-chain-fatty-acid--CoA ligase 1 (698 aa).

Position 1 is an N-acetylmethionine (Met1). 3'-nitrotyrosine is present on Tyr9. Residues 25–45 (LPTNTLMGFGAFAALTTFWYA) form a helical; Signal-anchor for type III membrane protein membrane-spanning segment. The Cytoplasmic segment spans residues 46-698 (TRPKPLKPPC…IDDLYSTIKV (653 aa)). Tyr84 carries the post-translational modification Phosphotyrosine. Ser135 carries O-linked (GlcNAc) serine glycosylation. N6-acetyllysine is present on residues Lys207, Lys356, and Lys386. At Ser620 the chain carries Phosphoserine. Lys632 carries the N6-acetyllysine modification.

It belongs to the ATP-dependent AMP-binding enzyme family. The cofactor is Mg(2+). In terms of tissue distribution, highly expressed in liver, heart, skeletal muscle, kidney and erythroid cells, and to a lesser extent in brain, lung, placenta and pancreas.

It localises to the mitochondrion outer membrane. Its subcellular location is the peroxisome membrane. The protein localises to the microsome membrane. It is found in the endoplasmic reticulum membrane. The enzyme catalyses a long-chain fatty acid + ATP + CoA = a long-chain fatty acyl-CoA + AMP + diphosphate. It carries out the reaction (5Z,8Z,11Z,14Z)-eicosatetraenoate + ATP + CoA = (5Z,8Z,11Z,14Z)-eicosatetraenoyl-CoA + AMP + diphosphate. The catalysed reaction is 3,7,11,15-tetramethylhexadecanoate + ATP + CoA = phytanoyl-CoA + AMP + diphosphate. It catalyses the reaction hexadecanoate + ATP + CoA = hexadecanoyl-CoA + AMP + diphosphate. The enzyme catalyses (E)-hexadec-2-enoate + ATP + CoA = (2E)-hexadecenoyl-CoA + AMP + diphosphate. It carries out the reaction 2,6,10,14-tetramethylpentadecanoate + ATP + CoA = pristanoyl-CoA + AMP + diphosphate. The catalysed reaction is 14,15-epoxy-(5Z,8Z,11Z)-eicosatrienoate + ATP + CoA = 14,15-epoxy-(5Z,8Z,11Z)-eicosatrienoyl-CoA + AMP + diphosphate. It catalyses the reaction 5-hydroxy-(6E,8Z,11Z,14Z)-eicosatetraenoate + ATP + CoA = 5-hydroxy-(6E,8Z,11Z,14Z)-eicosatetraenoyl-CoA + AMP + diphosphate. The enzyme catalyses 12-hydroxy-(5Z,8Z,10E,14Z)-eicosatetraenoate + ATP + CoA = 12-hydroxy-(5Z,8Z,10E,14Z)-eicosatetraenoyl-CoA + AMP + diphosphate. It carries out the reaction 15-hydroxy-(5Z,8Z,11Z,13E)-eicosatetraenoate + ATP + CoA = 15-hydroxy-(5Z,8Z,11Z,13E)-eicosatetraenoyl-CoA + AMP + diphosphate. The catalysed reaction is (9Z)-octadecenoate + ATP + CoA = (9Z)-octadecenoyl-CoA + AMP + diphosphate. Its activity is regulated as follows. Inhibited at high temperature and by arachidonate. Catalyzes the conversion of long-chain fatty acids to their active form acyl-CoAs for both synthesis of cellular lipids, and degradation via beta-oxidation. Preferentially uses palmitoleate, oleate and linoleate. Preferentially activates arachidonate than epoxyeicosatrienoic acids (EETs) or hydroxyeicosatrienoic acids (HETEs). This is Long-chain-fatty-acid--CoA ligase 1 from Homo sapiens (Human).